The sequence spans 528 residues: GTPase Obg (528 aa).

The Obg domain maps to 2 to 159 (ASFVDRVVLH…SDIVLELKSI (158 aa)). One can recognise an OBG-type G domain in the interval 160–343 (ADIALVGFPS…LGFAMAEIVQ (184 aa)). GTP is bound by residues 166–173 (GFPSAGKS), 191–195 (FTTLI), 212–215 (DVPG), 295–298 (NKVD), and 324–326 (SAT). The Mg(2+) site is built by Ser-173 and Thr-193. The region spanning 363–447 (PRAVNESGFK…DDGVVFDWEP (85 aa)) is the OCT domain. A disordered region spans residues 471-490 (DRPTRSQKRDEQIERREAKA).

The protein belongs to the TRAFAC class OBG-HflX-like GTPase superfamily. OBG GTPase family. Monomer. The cofactor is Mg(2+).

Its subcellular location is the cytoplasm. Its function is as follows. An essential GTPase which binds GTP, GDP and possibly (p)ppGpp with moderate affinity, with high nucleotide exchange rates and a fairly low GTP hydrolysis rate. Plays a role in control of the cell cycle, stress response, ribosome biogenesis and in those bacteria that undergo differentiation, in morphogenesis control. The chain is GTPase Obg from Paenarthrobacter aurescens (strain TC1).